The following is a 712-amino-acid chain: Polyribonucleotide nucleotidyltransferase (712 aa).

Mg(2+) contacts are provided by aspartate 487 and aspartate 493. Residues 554-613 enclose the KH domain; it reads PRIEVMNIPVDKIREVIGSGGKVIREIVEKTGAKINIEDDGTVKIASSSGKEIEAARKWI. The S1 motif domain occupies 623–691; it reads GQIYEGTVVK…ERGKVRLSMK (69 aa).

Belongs to the polyribonucleotide nucleotidyltransferase family. Requires Mg(2+) as cofactor.

Its subcellular location is the cytoplasm. It carries out the reaction RNA(n+1) + phosphate = RNA(n) + a ribonucleoside 5'-diphosphate. Its function is as follows. Involved in mRNA degradation. Catalyzes the phosphorolysis of single-stranded polyribonucleotides processively in the 3'- to 5'-direction. In Rhizobium etli (strain ATCC 51251 / DSM 11541 / JCM 21823 / NBRC 15573 / CFN 42), this protein is Polyribonucleotide nucleotidyltransferase.